The chain runs to 48 residues: Small ribosomal subunit protein uS14 (48 aa).

Residues C13, C16, C31, and C34 each coordinate Zn(2+).

The protein belongs to the universal ribosomal protein uS14 family. Zinc-binding uS14 subfamily. In terms of assembly, part of the 30S ribosomal subunit. Requires Zn(2+) as cofactor.

Binds 16S rRNA, required for the assembly of 30S particles. The sequence is that of Small ribosomal subunit protein uS14 from Methanopyrus kandleri (strain AV19 / DSM 6324 / JCM 9639 / NBRC 100938).